Reading from the N-terminus, the 299-residue chain is ATP synthase gamma chain (299 aa).

This sequence belongs to the ATPase gamma chain family. In terms of assembly, F-type ATPases have 2 components, CF(1) - the catalytic core - and CF(0) - the membrane proton channel. CF(1) has five subunits: alpha(3), beta(3), gamma(1), delta(1), epsilon(1). CF(0) has three main subunits: a, b and c.

It is found in the cell membrane. Produces ATP from ADP in the presence of a proton gradient across the membrane. The gamma chain is believed to be important in regulating ATPase activity and the flow of protons through the CF(0) complex. This Levilactobacillus brevis (strain ATCC 367 / BCRC 12310 / CIP 105137 / JCM 1170 / LMG 11437 / NCIMB 947 / NCTC 947) (Lactobacillus brevis) protein is ATP synthase gamma chain.